Here is a 597-residue protein sequence, read N- to C-terminus: Integrator complex subunit 11 (597 aa).

Residues His68, His70, Asp72, His73, His157, and Asp178 each coordinate Zn(2+). The HXHXDH motif motif lies at 68 to 73 (HFHLDH). Glu203 is an active-site residue. His414 contributes to the Zn(2+) binding site. Residue Lys462 participates in 1D-myo-inositol hexakisphosphate binding.

It belongs to the metallo-beta-lactamase superfamily. RNA-metabolizing metallo-beta-lactamase-like family. INTS11 subfamily. Belongs to the multiprotein complex Integrator, at least composed of IntS1, IntS2, IntS3, IntS4, omd/IntS5, IntS6, defl/IntS7, IntS8, IntS9, IntS10, IntS11, IntS12, asun/IntS13, IntS14 and IntS15. The core complex associates with protein phosphatase 2A subunits mts/PP2A and Pp2A-29B, to form the Integrator-PP2A (INTAC) complex. IntS11 is part of the RNA endonuclease subcomplex, composed of IntS4, IntS9, IntS11 and inositol hexakisphosphate (InsP6). Interacts with Brat1; interaction is required for the assembly of the RNA endonuclease subcomplex and inhibits the endonuclease activity of IntS11 before formation of mature integrator complex. Requires Zn(2+) as cofactor. Expressed in neurons and glia of the larval and adult brain.

The protein resides in the nucleus. It is found in the cytoplasm. Its subcellular location is the cytosol. Its activity is regulated as follows. The RNA endonuclease activity is inhibited by Brat1 that forms hyrogen bond and hydrophobic interactions with the active site. Its function is as follows. RNA endonuclease component of the integrator complex, a multiprotein complex that terminates RNA polymerase II (Pol II) transcription in the promoter-proximal region of genes. The integrator complex provides a quality checkpoint during transcription elongation by driving premature transcription termination of transcripts that are unfavorably configured for transcriptional elongation: the complex terminates transcription by (1) catalyzing dephosphorylation of the C-terminal domain (CTD) of Pol II subunit Polr2A/Rbp1 and Spt5, and (2) degrading the exiting nascent RNA transcript via endonuclease activity. The integrator complex is also involved in the 3'-end processing of the U7 snRNA, and also the spliceosomal snRNAs U1, U2, U4 and U5. Within the integrator complex, IntS11 constitutes the RNA endonuclease subunit that degrades exiting nascent RNA transcripts. This is Integrator complex subunit 11 from Drosophila melanogaster (Fruit fly).